Consider the following 93-residue polypeptide: Small ribosomal subunit protein uS19 (93 aa).

The protein belongs to the universal ribosomal protein uS19 family.

Protein S19 forms a complex with S13 that binds strongly to the 16S ribosomal RNA. The polypeptide is Small ribosomal subunit protein uS19 (Mycobacterium sp. (strain JLS)).